The chain runs to 100 residues: Apolipoprotein C-II (100 aa).

An N-terminal signal peptide occupies residues 1 to 22 (MGSRFLLALFLVLLVLGYEVQG). The interval 66–74 (SVDEKLRDM) is lipid binding. The segment at 78–100 (SSAAVSTYAGIFTDQILTLLKGE) is lipoprotein lipase cofactor.

It belongs to the apolipoprotein C2 family. In terms of processing, proapolipoprotein C-II is synthesized as a sialic acid containing glycoprotein which is subsequently desialylated prior to its proteolytic processing. Post-translationally, proapolipoprotein C-II, the major form found in plasma undergoes proteolytic cleavage of its N-terminal hexapeptide to generate the mature form apolipoprotein C-II, which occurs as the minor form in plasma.

The protein resides in the secreted. In terms of biological role, component of chylomicrons, very low-density lipoproteins (VLDL), low-density lipoproteins (LDL), and high-density lipoproteins (HDL) in plasma. Plays an important role in lipoprotein metabolism as an activator of lipoprotein lipase. The chain is Apolipoprotein C-II (Apoc2) from Neotoma lepida (Desert woodrat).